Reading from the N-terminus, the 318-residue chain is ATP synthase gamma chain (318 aa).

It belongs to the ATPase gamma chain family. F-type ATPases have 2 components, CF(1) - the catalytic core - and CF(0) - the membrane proton channel. CF(1) has five subunits: alpha(3), beta(3), gamma(1), delta(1), epsilon(1). CF(0) has three main subunits: a, b and c.

The protein localises to the cell membrane. In terms of biological role, produces ATP from ADP in the presence of a proton gradient across the membrane. The gamma chain is believed to be important in regulating ATPase activity and the flow of protons through the CF(0) complex. In Lactobacillus johnsonii (strain CNCM I-12250 / La1 / NCC 533), this protein is ATP synthase gamma chain.